We begin with the raw amino-acid sequence, 808 residues long: N-terminal kinase-like protein (808 aa).

The region spanning 14 to 314 (FELIPEPPEG…PEDFCRHKVL (301 aa)) is the Protein kinase domain. HEAT repeat units lie at residues 350–388 (IIPVVVKMFSSTDRAMRIRLLQQMEQFIQYLDEPTVNTQ), 389–427 (IFPHVVHGFLDTNPAIREQTVKSMLLLAPKLNEANLNVE), and 507–545 (ILPVLCGLTVDPEKSVRDQAFKAIRSFLSKLESVSEDPT). Disordered stretches follow at residues 540-566 (VSEDPTQLEEVEKDVHAASSPGMGGAA), 587-646 (SHPT…RWDD), and 658-808 (SVLA…RKLD). Low complexity predominate over residues 556–566 (AASSPGMGGAA). The span at 587–600 (SHPTTAPTETNIPQ) shows a compositional bias: polar residues. Positions 601–617 (RPTPEGVPAPAPTPVPA) are enriched in pro residues. A compositionally biased stretch (polar residues) spans 660 to 680 (LAQQDDWSTGGQVSRASQVSN). Basic and acidic residues predominate over residues 681–690 (SDHKSSKSPE). A Phosphoserine modification is found at Ser-754. Over residues 755-764 (WGEDNWEGLE) the composition is skewed to acidic residues. Positions 761–797 (EGLETDSRQVKAELARKKREERRREMEAKRAERKVAK) form a coiled coil. 2 stretches are compositionally biased toward basic and acidic residues: residues 765 to 775 (TDSRQVKAELA) and 782 to 795 (RRREMEAKRAERKV). The interaction with COPB1 stretch occupies residues 793 to 808 (RKVAKGPMKLGARKLD).

Belongs to the protein kinase superfamily. As to quaternary structure, interacts with GORAB. Interacts with COPA, COPB1 and COPB2. Homooligomer. Interacts with AP2B1. Ubiquitous.

It is found in the cytoplasm. The protein resides in the cytoskeleton. The protein localises to the microtubule organizing center. Its subcellular location is the centrosome. It localises to the endoplasmic reticulum-Golgi intermediate compartment. It is found in the golgi apparatus. The protein resides in the cis-Golgi network. The protein localises to the nucleus. In terms of biological role, regulates COPI-mediated retrograde protein traffic at the interface between the Golgi apparatus and the endoplasmic reticulum. Involved in the maintenance of the Golgi apparatus morphology. Functionally, acts as a transcriptional activator. It binds to three different types of GC-rich DNA binding sites (box-A, -B and -C) in the beta-polymerase promoter region. It also binds to the TERT promoter region. In Homo sapiens (Human), this protein is N-terminal kinase-like protein (SCYL1).